The following is a 293-amino-acid chain: Acetylglutamate kinase (293 aa).

Residues 68–69 (GG), R90, and N189 contribute to the substrate site.

This sequence belongs to the acetylglutamate kinase family. ArgB subfamily.

Its subcellular location is the cytoplasm. It catalyses the reaction N-acetyl-L-glutamate + ATP = N-acetyl-L-glutamyl 5-phosphate + ADP. It functions in the pathway amino-acid biosynthesis; L-arginine biosynthesis; N(2)-acetyl-L-ornithine from L-glutamate: step 2/4. In terms of biological role, catalyzes the ATP-dependent phosphorylation of N-acetyl-L-glutamate. The protein is Acetylglutamate kinase of Caldicellulosiruptor bescii (strain ATCC BAA-1888 / DSM 6725 / KCTC 15123 / Z-1320) (Anaerocellum thermophilum).